The following is a 259-amino-acid chain: Proteasome subunit alpha (259 aa).

It belongs to the peptidase T1A family. In terms of assembly, the 20S proteasome core is composed of 14 alpha and 14 beta subunits that assemble into four stacked heptameric rings, resulting in a barrel-shaped structure. The two inner rings, each composed of seven catalytic beta subunits, are sandwiched by two outer rings, each composed of seven alpha subunits. The catalytic chamber with the active sites is on the inside of the barrel. Has a gated structure, the ends of the cylinder being occluded by the N-termini of the alpha-subunits. Is capped at one or both ends by the proteasome regulatory ATPase, PAN.

It localises to the cytoplasm. The formation of the proteasomal ATPase PAN-20S proteasome complex, via the docking of the C-termini of PAN into the intersubunit pockets in the alpha-rings, triggers opening of the gate for substrate entry. Interconversion between the open-gate and close-gate conformations leads to a dynamic regulation of the 20S proteasome proteolysis activity. Functionally, component of the proteasome core, a large protease complex with broad specificity involved in protein degradation. This Methanococcus vannielii (strain ATCC 35089 / DSM 1224 / JCM 13029 / OCM 148 / SB) protein is Proteasome subunit alpha.